The sequence spans 130 residues: Holo-[acyl-carrier-protein] synthase (130 aa).

Mg(2+) is bound by residues Asp-9 and Glu-58.

The protein belongs to the P-Pant transferase superfamily. AcpS family. The cofactor is Mg(2+).

The protein resides in the cytoplasm. The enzyme catalyses apo-[ACP] + CoA = holo-[ACP] + adenosine 3',5'-bisphosphate + H(+). Functionally, transfers the 4'-phosphopantetheine moiety from coenzyme A to a Ser of acyl-carrier-protein. In Mycolicibacterium smegmatis (strain ATCC 700084 / mc(2)155) (Mycobacterium smegmatis), this protein is Holo-[acyl-carrier-protein] synthase.